A 168-amino-acid chain; its full sequence is Large ribosomal subunit protein uL5 (168 aa).

The protein belongs to the universal ribosomal protein uL5 family. As to quaternary structure, part of the 50S ribosomal subunit; contacts the 5S rRNA and probably tRNA. Forms a bridge to the 30S subunit in the 70S ribosome.

This is one of the proteins that bind and probably mediate the attachment of the 5S RNA into the large ribosomal subunit, where it forms part of the central protuberance. In the 70S ribosome it contacts protein S13 of the 30S subunit (bridge B1b), connecting the 2 subunits; this bridge is implicated in subunit movement. May contact the P site tRNA; the 5S rRNA and some of its associated proteins might help stabilize positioning of ribosome-bound tRNAs. The polypeptide is Large ribosomal subunit protein uL5 (Methanospirillum hungatei JF-1 (strain ATCC 27890 / DSM 864 / NBRC 100397 / JF-1)).